Reading from the N-terminus, the 336-residue chain is N-acetyl-gamma-glutamyl-phosphate reductase (336 aa).

Cys-156 is an active-site residue.

This sequence belongs to the NAGSA dehydrogenase family. Type 1 subfamily.

The protein resides in the cytoplasm. The enzyme catalyses N-acetyl-L-glutamate 5-semialdehyde + phosphate + NADP(+) = N-acetyl-L-glutamyl 5-phosphate + NADPH + H(+). The protein operates within amino-acid biosynthesis; L-arginine biosynthesis; N(2)-acetyl-L-ornithine from L-glutamate: step 3/4. In terms of biological role, catalyzes the NADPH-dependent reduction of N-acetyl-5-glutamyl phosphate to yield N-acetyl-L-glutamate 5-semialdehyde. The chain is N-acetyl-gamma-glutamyl-phosphate reductase from Moritella abyssi.